The primary structure comprises 294 residues: ATP synthase gamma chain (294 aa).

The protein belongs to the ATPase gamma chain family. As to quaternary structure, F-type ATPases have 2 components, CF(1) - the catalytic core - and CF(0) - the membrane proton channel. CF(1) has five subunits: alpha(3), beta(3), gamma(1), delta(1), epsilon(1). CF(0) has three main subunits: a, b and c.

Its subcellular location is the cell membrane. In terms of biological role, produces ATP from ADP in the presence of a proton gradient across the membrane. The gamma chain is believed to be important in regulating ATPase activity and the flow of protons through the CF(0) complex. The protein is ATP synthase gamma chain of Ruminiclostridium cellulolyticum (strain ATCC 35319 / DSM 5812 / JCM 6584 / H10) (Clostridium cellulolyticum).